We begin with the raw amino-acid sequence, 196 residues long: 7-methyl-GTP pyrophosphatase (196 aa).

Catalysis depends on Asp72, which acts as the Proton acceptor.

The protein belongs to the Maf family. YceF subfamily. A divalent metal cation is required as a cofactor.

The protein resides in the cytoplasm. The enzyme catalyses N(7)-methyl-GTP + H2O = N(7)-methyl-GMP + diphosphate + H(+). In terms of biological role, nucleoside triphosphate pyrophosphatase that hydrolyzes 7-methyl-GTP (m(7)GTP). May have a dual role in cell division arrest and in preventing the incorporation of modified nucleotides into cellular nucleic acids. The polypeptide is 7-methyl-GTP pyrophosphatase (Neisseria gonorrhoeae (strain ATCC 700825 / FA 1090)).